The following is a 103-amino-acid chain: Large ribosomal subunit protein bL21 (103 aa).

The protein belongs to the bacterial ribosomal protein bL21 family. In terms of assembly, part of the 50S ribosomal subunit. Contacts protein L20.

In terms of biological role, this protein binds to 23S rRNA in the presence of protein L20. In Psychrobacter arcticus (strain DSM 17307 / VKM B-2377 / 273-4), this protein is Large ribosomal subunit protein bL21.